Reading from the N-terminus, the 184-residue chain is Cobalamin adenosyltransferase (184 aa).

A disordered region spans residues 1-21; sequence MGNRLSKIATRTGDAGTTGLG. Residues 10 to 13, 18 to 19, lysine 28, 130 to 134, and asparagine 154 contribute to the ATP site; these read TRTG, TG, and RRAER.

This sequence belongs to the Cob(I)alamin adenosyltransferase family. Homotrimer.

It carries out the reaction 2 cob(II)alamin + AH2 + 2 ATP = 2 adenosylcob(III)alamin + 2 triphosphate + A + 2 H(+). With respect to regulation, is potentially allosterically regulated by GTP/GDP, which enhances its affinity for AdoCbl by 5-fold. Binds cob(II)alamin weakly in the absence of ATP. The presence of ATP (but not GTP or GDP) increases the affinity of cob(II)alamin for the enzyme, and stoichiometric binding is observed. GTP blocks the transfer of cob(II)alamin to IcmF from ATR, thus averting its reconstitution with inactive cofactor. Its function is as follows. Adenosyltransferase that catalyzes the conversion of cob(II)alamin to adenosylcob(III)alamin (AdoCbl) in the presence of ATP and an electron donor. Acts as an accessory protein of IcmF that functions in cofactor repair, since IcmF is prone to inactivation during catalytic turnover due to the occasional loss of the 5'-deoxyadenosine moiety and formation of the inactive cob(II)alamin cofactor in its active site. Thus, receives and repairs the inactive cofactor, which is then reloaded onto IcmF in a GTPase-gated step. The sequence is that of Cobalamin adenosyltransferase from Cupriavidus metallidurans (strain ATCC 43123 / DSM 2839 / NBRC 102507 / CH34) (Ralstonia metallidurans).